We begin with the raw amino-acid sequence, 336 residues long: RHOMBOID-like protein 12, mitochondrial (336 aa).

The N-terminal 85 residues, 1 to 85 (MKAIFNRRVV…RGFFASALGN (85 aa)), are a transit peptide targeting the mitochondrion. 6 helical membrane passes run 135-155 (VVLGLVIANAGVFVMWRVFNQ), 185-205 (IDIGHIVSNMIGLYFFGTSIA), 216-236 (LYLAGALGGSVFYLIHHAYMA), 254-274 (PGLGASGAVNAIMLLDIFLHP), 276-296 (ATLYLEFFIPVPAMLLGIFLI), and 307-327 (NSNISGSAHLGGAAVAAIAWA). Ser-259 acts as the Nucleophile in catalysis. His-315 acts as the Charge relay system in catalysis.

Belongs to the peptidase S54 family.

The protein resides in the mitochondrion membrane. Its function is as follows. Probable rhomboid-type serine protease that catalyzes intramembrane proteolysis. Unable to cleave either of the yeast Pcp1 substrates in yeast cells. The sequence is that of RHOMBOID-like protein 12, mitochondrial from Arabidopsis thaliana (Mouse-ear cress).